Consider the following 785-residue polypeptide: Endonuclease MutS2 (785 aa).

Position 332–339 (332–339 (GPNTGGKT)) interacts with ATP. Residues 710 to 785 (VDLRGMDSEE…GNGVTVVELK (76 aa)) enclose the Smr domain.

This sequence belongs to the DNA mismatch repair MutS family. MutS2 subfamily. In terms of assembly, homodimer. Binds to stalled ribosomes, contacting rRNA.

Functionally, endonuclease that is involved in the suppression of homologous recombination and thus may have a key role in the control of bacterial genetic diversity. In terms of biological role, acts as a ribosome collision sensor, splitting the ribosome into its 2 subunits. Detects stalled/collided 70S ribosomes which it binds and splits by an ATP-hydrolysis driven conformational change. Acts upstream of the ribosome quality control system (RQC), a ribosome-associated complex that mediates the extraction of incompletely synthesized nascent chains from stalled ribosomes and their subsequent degradation. Probably generates substrates for RQC. The chain is Endonuclease MutS2 from Clostridium novyi (strain NT).